The sequence spans 274 residues: Thymidylate synthase (274 aa).

Arg-21 provides a ligand contact to dUMP. His-51 is a (6R)-5,10-methylene-5,6,7,8-tetrahydrofolate binding site. 123–124 (RR) is a binding site for dUMP. The Nucleophile role is filled by Cys-156. DUMP-binding positions include 176–179 (RSAD), Asn-187, and 217–219 (HIY). Asp-179 serves as a coordination point for (6R)-5,10-methylene-5,6,7,8-tetrahydrofolate. Ser-273 serves as a coordination point for (6R)-5,10-methylene-5,6,7,8-tetrahydrofolate.

The protein belongs to the thymidylate synthase family. Bacterial-type ThyA subfamily. Homodimer.

The protein localises to the cytoplasm. It catalyses the reaction dUMP + (6R)-5,10-methylene-5,6,7,8-tetrahydrofolate = 7,8-dihydrofolate + dTMP. It participates in pyrimidine metabolism; dTTP biosynthesis. Functionally, catalyzes the reductive methylation of 2'-deoxyuridine-5'-monophosphate (dUMP) to 2'-deoxythymidine-5'-monophosphate (dTMP) while utilizing 5,10-methylenetetrahydrofolate (mTHF) as the methyl donor and reductant in the reaction, yielding dihydrofolate (DHF) as a by-product. This enzymatic reaction provides an intracellular de novo source of dTMP, an essential precursor for DNA biosynthesis. This is Thymidylate synthase from Francisella tularensis subsp. tularensis (strain SCHU S4 / Schu 4).